Here is a 143-residue protein sequence, read N- to C-terminus: Fluoride-specific ion channel FluC (143 aa).

The next 4 helical transmembrane spans lie at 3–23 (AVVW…GSGL), 41–61 (WGTL…LIWL), 76–96 (IVGL…CLVF), and 103–123 (LMVG…VFLG). Residues Gly81 and Thr84 each coordinate Na(+).

The protein belongs to the fluoride channel Fluc/FEX (TC 1.A.43) family.

It is found in the cell inner membrane. It carries out the reaction fluoride(in) = fluoride(out). Its activity is regulated as follows. Na(+) is not transported, but it plays an essential structural role and its presence is essential for fluoride channel function. In terms of biological role, fluoride-specific ion channel. Important for reducing fluoride concentration in the cell, thus reducing its toxicity. The protein is Fluoride-specific ion channel FluC of Xylella fastidiosa (strain 9a5c).